The sequence spans 625 residues: Endoglucanase 13 (625 aa).

The signal sequence occupies residues 1–34 (MAATMNKTPATTFLLIPAAASLVLLLAAAASVEA). The active-site Nucleophile is the D91. H427 is an active-site residue. N440 carries N-linked (GlcNAc...) asparagine glycosylation. Active-site residues include D479 and E488. Residues 509 to 530 (ADNTPEYTPAPNAPSPSNGGSP) are disordered.

This sequence belongs to the glycosyl hydrolase 9 (cellulase E) family. Expressed in roots and flowers.

The protein resides in the secreted. The enzyme catalyses Endohydrolysis of (1-&gt;4)-beta-D-glucosidic linkages in cellulose, lichenin and cereal beta-D-glucans.. This Oryza sativa subsp. japonica (Rice) protein is Endoglucanase 13 (GLU6).